The chain runs to 431 residues: UDP-N-acetylglucosamine 1-carboxyvinyltransferase (431 aa).

Lys22 to Asn23 is a phosphoenolpyruvate binding site. Arg102 serves as a coordination point for UDP-N-acetyl-alpha-D-glucosamine. Cys126 acts as the Proton donor in catalysis. Cys126 is modified (2-(S-cysteinyl)pyruvic acid O-phosphothioketal). UDP-N-acetyl-alpha-D-glucosamine is bound by residues Arg131–Leu135, Asp316, and Ile338.

Belongs to the EPSP synthase family. MurA subfamily.

It is found in the cytoplasm. It carries out the reaction phosphoenolpyruvate + UDP-N-acetyl-alpha-D-glucosamine = UDP-N-acetyl-3-O-(1-carboxyvinyl)-alpha-D-glucosamine + phosphate. It functions in the pathway cell wall biogenesis; peptidoglycan biosynthesis. Functionally, cell wall formation. Adds enolpyruvyl to UDP-N-acetylglucosamine. The polypeptide is UDP-N-acetylglucosamine 1-carboxyvinyltransferase (Beijerinckia indica subsp. indica (strain ATCC 9039 / DSM 1715 / NCIMB 8712)).